The sequence spans 276 residues: Lysosome-associated membrane glycoprotein 5 (276 aa).

A signal peptide spans 1 to 27 (MDYRACTSALRMPVLLLLLCTFSCNLA). Residues 28 to 231 (EQEVENLSGL…PTDQRKQLEE (204 aa)) lie on the Extracellular side of the membrane. N33, N51, and N100 each carry an N-linked (GlcNAc...) asparagine glycan. Residues 232–252 (TLPLILGLTLGVAILIIVAVY) traverse the membrane as a helical segment. Topologically, residues 253–276 (HIHHKMTANQVQIPRDRSLYKHMG) are cytoplasmic.

This sequence belongs to the LAMP family. Post-translationally, glycosylated.

Its subcellular location is the cytoplasmic vesicle membrane. The protein localises to the cell membrane. It localises to the cell projection. The protein resides in the dendrite. It is found in the cytoplasmic vesicle. Its subcellular location is the secretory vesicle. The protein localises to the synaptic vesicle membrane. It localises to the growth cone membrane. The protein resides in the early endosome membrane. It is found in the recycling endosome. Its subcellular location is the endoplasmic reticulum-Golgi intermediate compartment membrane. The protein localises to the endosome membrane. In terms of biological role, plays a role in short-term synaptic plasticity in a subset of GABAergic neurons in the brain. In Xenopus tropicalis (Western clawed frog), this protein is Lysosome-associated membrane glycoprotein 5 (lamp5).